The primary structure comprises 401 residues: Imidazolonepropionase (401 aa).

Fe(3+) contacts are provided by His-66 and His-68. His-66 and His-68 together coordinate Zn(2+). Arg-75, Tyr-138, and His-171 together coordinate 4-imidazolone-5-propanoate. Residue Tyr-138 participates in N-formimidoyl-L-glutamate binding. A Fe(3+)-binding site is contributed by His-236. His-236 is a binding site for Zn(2+). Position 239 (Gln-239) interacts with 4-imidazolone-5-propanoate. Asp-311 serves as a coordination point for Fe(3+). Asp-311 contributes to the Zn(2+) binding site. Asn-313 and Gly-315 together coordinate N-formimidoyl-L-glutamate. Residue Thr-316 participates in 4-imidazolone-5-propanoate binding.

The protein belongs to the metallo-dependent hydrolases superfamily. HutI family. Zn(2+) serves as cofactor. Fe(3+) is required as a cofactor.

The protein resides in the cytoplasm. It carries out the reaction 4-imidazolone-5-propanoate + H2O = N-formimidoyl-L-glutamate. It participates in amino-acid degradation; L-histidine degradation into L-glutamate; N-formimidoyl-L-glutamate from L-histidine: step 3/3. In terms of biological role, catalyzes the hydrolytic cleavage of the carbon-nitrogen bond in imidazolone-5-propanoate to yield N-formimidoyl-L-glutamate. It is the third step in the universal histidine degradation pathway. This is Imidazolonepropionase from Pseudomonas entomophila (strain L48).